Consider the following 492-residue polypeptide: NADH-quinone oxidoreductase subunit N (492 aa).

The next 14 helical transmembrane spans lie at 12 to 32 (LLPY…MIAI), 44 to 64 (ISVV…AGII), 76 to 96 (LFVI…CALA), 115 to 135 (LYLL…AQHL), 138 to 158 (FFMS…YTYM), 169 to 189 (YLVL…FIYA), 212 to 232 (LILG…AAPF), 244 to 264 (PAPI…ALAV), 272 to 292 (LLAL…SILL), 306 to 326 (LLGY…VSIG), 334 to 354 (SMYM…VTLM), 381 to 401 (TAVM…AGFI), 416 to 438 (WFLA…RVLL), and 463 to 483 (IMVI…NSMI).

The protein belongs to the complex I subunit 2 family. As to quaternary structure, NDH-1 is composed of 14 different subunits. Subunits NuoA, H, J, K, L, M, N constitute the membrane sector of the complex.

It localises to the cell inner membrane. It catalyses the reaction a quinone + NADH + 5 H(+)(in) = a quinol + NAD(+) + 4 H(+)(out). In terms of biological role, NDH-1 shuttles electrons from NADH, via FMN and iron-sulfur (Fe-S) centers, to quinones in the respiratory chain. The immediate electron acceptor for the enzyme in this species is believed to be ubiquinone. Couples the redox reaction to proton translocation (for every two electrons transferred, four hydrogen ions are translocated across the cytoplasmic membrane), and thus conserves the redox energy in a proton gradient. The polypeptide is NADH-quinone oxidoreductase subunit N (Psychrobacter arcticus (strain DSM 17307 / VKM B-2377 / 273-4)).